Here is a 364-residue protein sequence, read N- to C-terminus: Probable dual-specificity RNA methyltransferase RlmN (364 aa).

Glutamate 106 functions as the Proton acceptor in the catalytic mechanism. The Radical SAM core domain maps to 112–350; it reads YPQRNTVCIS…SCTVRDTRGR (239 aa). Residues cysteine 119 and cysteine 356 are joined by a disulfide bond. Residues cysteine 126, cysteine 130, and cysteine 133 each contribute to the [4Fe-4S] cluster site. S-adenosyl-L-methionine is bound by residues 177-178, serine 211, 234-236, and asparagine 313; these read GE and SLH. Residue cysteine 356 is the S-methylcysteine intermediate of the active site.

This sequence belongs to the radical SAM superfamily. RlmN family. [4Fe-4S] cluster is required as a cofactor.

It is found in the cytoplasm. It carries out the reaction adenosine(2503) in 23S rRNA + 2 reduced [2Fe-2S]-[ferredoxin] + 2 S-adenosyl-L-methionine = 2-methyladenosine(2503) in 23S rRNA + 5'-deoxyadenosine + L-methionine + 2 oxidized [2Fe-2S]-[ferredoxin] + S-adenosyl-L-homocysteine. The catalysed reaction is adenosine(37) in tRNA + 2 reduced [2Fe-2S]-[ferredoxin] + 2 S-adenosyl-L-methionine = 2-methyladenosine(37) in tRNA + 5'-deoxyadenosine + L-methionine + 2 oxidized [2Fe-2S]-[ferredoxin] + S-adenosyl-L-homocysteine. Functionally, specifically methylates position 2 of adenine 2503 in 23S rRNA and position 2 of adenine 37 in tRNAs. This is Probable dual-specificity RNA methyltransferase RlmN from Mycobacterium ulcerans (strain Agy99).